The sequence spans 228 residues: Prolactin (228 aa).

A signal peptide spans 1–29; sequence MCTKRSSLKGSLLLLLLISSLLLSRSVDS. Cys33 and Cys40 are joined by a disulfide. 3 positions are modified to phosphoserine: Ser55, Ser63, and Ser119. Disulfide bonds link Cys87–Cys203 and Cys220–Cys228.

This sequence belongs to the somatotropin/prolactin family. In terms of assembly, interacts with PRLR.

It is found in the secreted. Its function is as follows. Prolactin acts primarily on the mammary gland by promoting lactation. The chain is Prolactin (PRL) from Isoodon macrourus (Short-nosed bandicoot).